A 115-amino-acid polypeptide reads, in one-letter code: MARVKRGNVARKRRNKILRLARGFRGSNGTLFRTANQRVMKALCNAYRDRRRRKRDFRRLWIARINAAARLNGVSYSRLIGGLKQADVRINRKMLAQLAVADPSSFTTVVNATQG.

The protein belongs to the bacterial ribosomal protein bL20 family.

In terms of biological role, binds directly to 23S ribosomal RNA and is necessary for the in vitro assembly process of the 50S ribosomal subunit. It is not involved in the protein synthesizing functions of that subunit. The protein is Large ribosomal subunit protein bL20 of Synechococcus sp. (strain WH7803).